A 327-amino-acid polypeptide reads, in one-letter code: Aspartate--ammonia ligase (327 aa).

The protein belongs to the class-II aminoacyl-tRNA synthetase family. AsnA subfamily.

The protein resides in the cytoplasm. The enzyme catalyses L-aspartate + NH4(+) + ATP = L-asparagine + AMP + diphosphate + H(+). The protein operates within amino-acid biosynthesis; L-asparagine biosynthesis; L-asparagine from L-aspartate (ammonia route): step 1/1. The protein is Aspartate--ammonia ligase of Mycoplasmoides gallisepticum (strain R(low / passage 15 / clone 2)) (Mycoplasma gallisepticum).